The following is a 195-amino-acid chain: MENHKSNNKENITIVDISRKINQLPEAERNLLENGSVYVGLNAALCGLIANSLFRRILNVTKARIAAGLPMAGIPFLTTDLTYRCFVSFPLNTGDLDCETCTITRSGLTGLVIGGLYPVFLAIPVNGGLAARYQSALLPHKGNILSYWIRTSKPVFRKMLFPILLQTMFSAYLGSEQYKLLIKALQLSEPGKEIH.

Residues 1–33 (MENHKSNNKENITIVDISRKINQLPEAERNLLE) lie on the Mitochondrial matrix side of the membrane. The chain crosses the membrane as a helical span at residues 34–54 (NGSVYVGLNAALCGLIANSLF). At 55–56 (RR) the chain is on the mitochondrial intermembrane side. The helical transmembrane segment at 57 to 77 (ILNVTKARIAAGLPMAGIPFL) threads the bilayer. The Mitochondrial matrix segment spans residues 78–110 (TTDLTYRCFVSFPLNTGDLDCETCTITRSGLTG). Residues 111–131 (LVIGGLYPVFLAIPVNGGLAA) traverse the membrane as a helical segment. Topologically, residues 132–158 (RYQSALLPHKGNILSYWIRTSKPVFRK) are mitochondrial intermembrane. Residues 159-175 (MLFPILLQTMFSAYLGS) form a helical membrane-spanning segment. Topologically, residues 176-195 (EQYKLLIKALQLSEPGKEIH) are mitochondrial matrix.

It belongs to the TMEM126 family. Interacts with OXA1L; promoting cotranslational quality control in mitochondria. In terms of tissue distribution, strongly expressed in brain, cerebellum, skeletal muscle, testis. High expression also found in fetal brain, fetal retinal pigmentary epithelium, and fetal retina. Highly expressed in retinal ganglion cells.

Its subcellular location is the mitochondrion inner membrane. Functionally, protein required for the cotranslational protein quality control in the inner membrane of the mitochondria. Associates with newly synthesized polypeptides and may act as a chaperone that cooperates with OXA1L for the insertion of newly synthesized mitochondrial proteins into the inner membrane. Required for the assembly of the ND4 module of mitochondrial complex I. In Homo sapiens (Human), this protein is Transmembrane protein 126A.